We begin with the raw amino-acid sequence, 191 residues long: Protein Ves (191 aa).

This sequence belongs to the Ves family.

The chain is Protein Ves from Escherichia coli O7:K1 (strain IAI39 / ExPEC).